We begin with the raw amino-acid sequence, 202 residues long: Thymidylate kinase (202 aa).

ATP is bound at residue 7 to 14 (GTEGVGKT).

Belongs to the thymidylate kinase family.

It catalyses the reaction dTMP + ATP = dTDP + ADP. Functionally, phosphorylation of dTMP to form dTDP in both de novo and salvage pathways of dTTP synthesis. The polypeptide is Thymidylate kinase (Acinetobacter baylyi (strain ATCC 33305 / BD413 / ADP1)).